The following is a 564-amino-acid chain: DNA ligase (564 aa).

Residue E234 participates in ATP binding. K236 functions as the N6-AMP-lysine intermediate in the catalytic mechanism. ATP contacts are provided by R241, R256, E288, and F323. Residue E288 coordinates a divalent metal cation. A divalent metal cation is bound at residue E383. ATP contacts are provided by R399 and K403.

The protein belongs to the ATP-dependent DNA ligase family. Requires a divalent metal cation as cofactor.

It catalyses the reaction ATP + (deoxyribonucleotide)n-3'-hydroxyl + 5'-phospho-(deoxyribonucleotide)m = (deoxyribonucleotide)n+m + AMP + diphosphate.. In terms of biological role, DNA ligase that seals nicks in double-stranded DNA during DNA replication, DNA recombination and DNA repair. It is not essential for viral replication and recombination. This Vertebrata (FPV) protein is DNA ligase (LIG).